The primary structure comprises 234 residues: Zinc finger FYVE domain-containing protein 21 (234 aa).

An FYVE-type zinc finger spans residues 44 to 104; the sequence is DKECPRCMQC…QCADCALVSH (61 aa). Positions 50, 53, 66, 69, 74, 77, 96, and 99 each coordinate Zn(2+). The interval 107–234 is PH-like; it reads AEFYDKQLKV…TKLLYESRDQ (128 aa).

In terms of assembly, interacts with PTK2/FAK1. Widely expressed.

It is found in the cell junction. Its subcellular location is the focal adhesion. It localises to the cytoplasmic vesicle. The protein resides in the endosome. Plays a role in cell adhesion, and thereby in cell motility which requires repeated formation and disassembly of focal adhesions. Regulates microtubule-induced PTK2/FAK1 dephosphorylation, an event important for focal adhesion disassembly, as well as integrin beta-1/ITGB1 cell surface expression. In Mus musculus (Mouse), this protein is Zinc finger FYVE domain-containing protein 21 (Zfyve21).